The primary structure comprises 477 residues: Cysteine--tRNA ligase (477 aa).

Residue Cys-29 coordinates Zn(2+). The short motif at 31–41 is the 'HIGH' region element; that stretch reads PTVQASPHIGH. Zn(2+)-binding residues include Cys-219, His-244, and Glu-248. The 'KMSKS' region signature appears at 275 to 279; it reads KMSKS. Lys-278 contacts ATP.

The protein belongs to the class-I aminoacyl-tRNA synthetase family. In terms of assembly, monomer. Zn(2+) is required as a cofactor.

The protein resides in the cytoplasm. It carries out the reaction tRNA(Cys) + L-cysteine + ATP = L-cysteinyl-tRNA(Cys) + AMP + diphosphate. The polypeptide is Cysteine--tRNA ligase (Leifsonia xyli subsp. xyli (strain CTCB07)).